Reading from the N-terminus, the 534-residue chain is NEDD8-activating enzyme E1 regulatory subunit (534 aa).

A2 is modified (N-acetylalanine). 2 positions are modified to N6-acetyllysine: K6 and K341. The tract at residues 331-344 (DMIADSGKYIKLQN) is interaction with UBA3.

This sequence belongs to the ubiquitin-activating E1 family. ULA1 subfamily. As to quaternary structure, heterodimer of UBA3 and NAE1. The complex binds NEDD8 and UBE2M. Binds APP and TP53BP2. Ubiquitinated by TRIP12, leading to its degradation by the proteasome. Ubiquitous in fetal tissues. Expressed throughout the adult brain.

It is found in the cell membrane. It participates in protein modification; protein neddylation. Binding of TP53BP2 to the regulatory subunit NAE1 decreases neddylation activity. Functionally, regulatory subunit of the dimeric UBA3-NAE1 E1 enzyme. E1 activates NEDD8 by first adenylating its C-terminal glycine residue with ATP, thereafter linking this residue to the side chain of the catalytic cysteine, yielding a NEDD8-UBA3 thioester and free AMP. E1 finally transfers NEDD8 to the catalytic cysteine of UBE2M. Necessary for cell cycle progression through the S-M checkpoint. Overexpression of NAE1 causes apoptosis through deregulation of NEDD8 conjugation. The covalent attachment of NEDD8 to target proteins is known as 'neddylation' and the process is involved in the regulation of cell growth, viability and development. This Homo sapiens (Human) protein is NEDD8-activating enzyme E1 regulatory subunit (NAE1).